Here is a 54-residue protein sequence, read N- to C-terminus: Large ribosomal subunit protein bL33 (54 aa).

The protein belongs to the bacterial ribosomal protein bL33 family.

The sequence is that of Large ribosomal subunit protein bL33 from Caldicellulosiruptor saccharolyticus (strain ATCC 43494 / DSM 8903 / Tp8T 6331).